The primary structure comprises 198 residues: Nucleoid occlusion factor SlmA (198 aa).

The HTH tetR-type domain maps to 10 to 70 (NRREEILQSL…SLIEFIEDSL (61 aa)). Positions 33-52 (TTAKLAASVGVSEAALYRHF) form a DNA-binding region, H-T-H motif. Residues 119-144 (DRLQGRINQLFERIEVQLRQVMREKK) adopt a coiled-coil conformation.

The protein belongs to the nucleoid occlusion factor SlmA family. As to quaternary structure, homodimer. Interacts with FtsZ.

The protein resides in the cytoplasm. It localises to the nucleoid. In terms of biological role, required for nucleoid occlusion (NO) phenomenon, which prevents Z-ring formation and cell division over the nucleoid. Acts as a DNA-associated cell division inhibitor that binds simultaneously chromosomal DNA and FtsZ, and disrupts the assembly of FtsZ polymers. SlmA-DNA-binding sequences (SBS) are dispersed on non-Ter regions of the chromosome, preventing FtsZ polymerization at these regions. The protein is Nucleoid occlusion factor SlmA of Klebsiella pneumoniae (strain 342).